We begin with the raw amino-acid sequence, 290 residues long: Cytochrome bo(3) ubiquinol oxidase subunit 2 (290 aa).

Residues Met-1–Gly-24 form the signal peptide. A lipid anchor (N-palmitoyl cysteine) is attached at Cys-25. The S-diacylglycerol cysteine moiety is linked to residue Cys-25. Residues Cys-25 to Ser-42 lie on the Extracellular side of the membrane. The chain crosses the membrane as a helical span at residues Ile-43 to Ile-63. Residues Tyr-64–Lys-87 are Cytoplasmic-facing. Residues Ile-88–Trp-108 traverse the membrane as a helical segment. Residues Asn-109–His-290 are Extracellular-facing.

Belongs to the cytochrome c oxidase subunit 2 family. In terms of assembly, heterooctamer of two A chains, two B chains, two C chains and two D chains.

The protein resides in the cell membrane. Its function is as follows. Cytochrome bo(3) ubiquinol terminal oxidase is the component of the aerobic respiratory chain of E.coli that predominates when cells are grown at high aeration. Has proton pump activity across the membrane in addition to electron transfer, pumping 2 protons/electron. The chain is Cytochrome bo(3) ubiquinol oxidase subunit 2 (cyoA) from Buchnera aphidicola subsp. Schizaphis graminum (strain Sg).